The chain runs to 362 residues: Chorismate synthase (362 aa).

Arginine 46 contacts NADP(+). FMN-binding positions include 121–123, 237–238, glycine 277, 292–296, and arginine 318; these read RAS, NA, and KPTPS.

Belongs to the chorismate synthase family. Homotetramer. FMNH2 serves as cofactor.

It carries out the reaction 5-O-(1-carboxyvinyl)-3-phosphoshikimate = chorismate + phosphate. The protein operates within metabolic intermediate biosynthesis; chorismate biosynthesis; chorismate from D-erythrose 4-phosphate and phosphoenolpyruvate: step 7/7. Functionally, catalyzes the anti-1,4-elimination of the C-3 phosphate and the C-6 proR hydrogen from 5-enolpyruvylshikimate-3-phosphate (EPSP) to yield chorismate, which is the branch point compound that serves as the starting substrate for the three terminal pathways of aromatic amino acid biosynthesis. This reaction introduces a second double bond into the aromatic ring system. This chain is Chorismate synthase, found in Campylobacter lari (strain RM2100 / D67 / ATCC BAA-1060).